The following is a 323-amino-acid chain: NADH-ubiquinone oxidoreductase chain 1 (323 aa).

Helical transmembrane passes span 8–28, 75–95, 105–125, 151–171, 177–197, 234–254, 258–278, and 298–318; these read LINPLLYMIPILLAVAFLTLI, MFLIAPTMALALAMSIWAPLP, LGILFILALSSLAVYTILGSG, LGLILLCMIMLAGGFTYTTLM, MWLIIPGWPMAAMWYISTLAE, ANILMMNTLSYLILFLGSSFM, ELTTISLMIKSSILSMIFLWV, and FLPITLAMTLWHISLPISMLG.

This sequence belongs to the complex I subunit 1 family. Core subunit of respiratory chain NADH dehydrogenase (Complex I) which is composed of 45 different subunits.

It is found in the mitochondrion inner membrane. The enzyme catalyses a ubiquinone + NADH + 5 H(+)(in) = a ubiquinol + NAD(+) + 4 H(+)(out). In terms of biological role, core subunit of the mitochondrial membrane respiratory chain NADH dehydrogenase (Complex I) which catalyzes electron transfer from NADH through the respiratory chain, using ubiquinone as an electron acceptor. Essential for the catalytic activity and assembly of complex I. The chain is NADH-ubiquinone oxidoreductase chain 1 (mt-nd1) from Xenopus laevis (African clawed frog).